The chain runs to 166 residues: MSSDVSPPPLLSAEAAAQLATAPPVFTTEQILEILPHRYPFLLVDRVVEYQPGQRAVGLKNVTFNEPFFQGHFPNRPIMPGVLIVEAMAQIGGIVLTKLPDVAGRLALFAGIDGVRFRRPVLPGDQLLLSADLLTIRQRRIGKMFCRAQVGGQLVTEGELMFSLVD.

His-72 is a catalytic residue.

The protein belongs to the thioester dehydratase family. FabZ subfamily.

The protein resides in the cytoplasm. The catalysed reaction is a (3R)-hydroxyacyl-[ACP] = a (2E)-enoyl-[ACP] + H2O. In terms of biological role, involved in unsaturated fatty acids biosynthesis. Catalyzes the dehydration of short chain beta-hydroxyacyl-ACPs and long chain saturated and unsaturated beta-hydroxyacyl-ACPs. The sequence is that of 3-hydroxyacyl-[acyl-carrier-protein] dehydratase FabZ from Synechococcus sp. (strain JA-2-3B'a(2-13)) (Cyanobacteria bacterium Yellowstone B-Prime).